Reading from the N-terminus, the 111-residue chain is Iron-sulfur cluster assembly protein CyaY (111 aa).

Belongs to the frataxin family.

In terms of biological role, involved in iron-sulfur (Fe-S) cluster assembly. May act as a regulator of Fe-S biogenesis. The polypeptide is Iron-sulfur cluster assembly protein CyaY (Cupriavidus pinatubonensis (strain JMP 134 / LMG 1197) (Cupriavidus necator (strain JMP 134))).